Consider the following 157-residue polypeptide: Protein Smg homolog (157 aa).

This sequence belongs to the Smg family.

The chain is Protein Smg homolog from Shewanella putrefaciens (strain CN-32 / ATCC BAA-453).